We begin with the raw amino-acid sequence, 166 residues long: NAD(P)H-quinone oxidoreductase subunit I, chloroplastic (166 aa).

4Fe-4S ferredoxin-type domains follow at residues 55–84 and 95–124; these read GRIH…VDWK and LNYS…MTEE. Residues Cys-64, Cys-67, Cys-70, Cys-74, Cys-104, Cys-107, Cys-110, and Cys-114 each coordinate [4Fe-4S] cluster.

The protein belongs to the complex I 23 kDa subunit family. In terms of assembly, NDH is composed of at least 16 different subunits, 5 of which are encoded in the nucleus. Requires [4Fe-4S] cluster as cofactor.

The protein localises to the plastid. It is found in the chloroplast thylakoid membrane. It carries out the reaction a plastoquinone + NADH + (n+1) H(+)(in) = a plastoquinol + NAD(+) + n H(+)(out). The catalysed reaction is a plastoquinone + NADPH + (n+1) H(+)(in) = a plastoquinol + NADP(+) + n H(+)(out). Functionally, NDH shuttles electrons from NAD(P)H:plastoquinone, via FMN and iron-sulfur (Fe-S) centers, to quinones in the photosynthetic chain and possibly in a chloroplast respiratory chain. The immediate electron acceptor for the enzyme in this species is believed to be plastoquinone. Couples the redox reaction to proton translocation, and thus conserves the redox energy in a proton gradient. In Hulsea algida (Pacific hulsea), this protein is NAD(P)H-quinone oxidoreductase subunit I, chloroplastic.